Here is a 111-residue protein sequence, read N- to C-terminus: uncharacterized protein (111 aa).

Helical transmembrane passes span 27–47 and 80–100; these read IIVL…GYKF and IFTG…ISAI.

The protein localises to the membrane. This is an uncharacterized protein from Acanthamoeba polyphaga (Amoeba).